The following is a 900-amino-acid chain: Exosome complex component 10 homolog (900 aa).

Disordered stretches follow at residues 1 to 31 and 147 to 174; these read MPRTPKRVHQEAKEESAQADQPPKKSASEDV and TSIEPAVASPQTQGTPKAGSWNRTTGTP. Residues 8–28 are compositionally biased toward basic and acidic residues; the sequence is VHQEAKEESAQADQPPKKSAS. The 3'-5' exonuclease domain occupies 273 to 438; that stretch reads VVDTVEKLKQ…YVYGRMTNDL (166 aa). Positions 296, 298, 354, and 423 each coordinate Mg(2+). The HRDC domain occupies 485 to 565; that stretch reads DNRQLYALRG…LKARDQPLVK (81 aa). The interval 731–900 is disordered; it reads EQLKRKHPQA…FSNVRKEGKK (170 aa). The span at 809 to 826 shows a compositional bias: basic residues; sequence RKQKKNQFQRGFKAKNRG. Low complexity predominate over residues 878 to 887; it reads NNRNNKQFNK.

It belongs to the exosome component 10/RRP6 family. Component of the RNA exosome complex. Interacts with spn-A/Rad51; the interaction is required for the recruitment of spn-A to the DNA-damage response foci. Interacts with Su(var)3-9, a heterochromatin factor; the interaction promotes association of Rrp6 with a subset of genomic loci. Interacts with Su(var)205, a heterochromatin factor. Interacts with HDAC1, a heterochromatin factor. Mg(2+) serves as cofactor. As to expression, salivary gland (at protein level).

It is found in the nucleus. Its subcellular location is the chromosome. The protein resides in the cytoplasm. The protein localises to the cell cortex. It localises to the cytoskeleton. It is found in the microtubule organizing center. Its subcellular location is the centrosome. The protein resides in the spindle. The protein localises to the midbody. Functionally, catalytic component of the RNA exosome complex which has 3'-&gt;5' exoribonuclease activity and participates in a multitude of cellular RNA processing and degradation events. Degrades a large variety of non-coding RNAs that are processed by the exosome, such as pre-rRNAs and some small nucleolar RNAs (snoRNAs). Degrades transcripts derived from different types of heterochromatic repeats, such as subtelomeric minisatellites and simple gagaa repeats. Degrades transcripts derived from transposons and transposon fragments. Degrades chromatin-associated transcripts and contributes to the compaction of heterochromatin. Required for the efficient repair of DNA double-strand breaks via homologous recombination after irradiation. Required for cell proliferation and error-free mitosis. This is Exosome complex component 10 homolog from Drosophila melanogaster (Fruit fly).